Consider the following 252-residue polypeptide: Coenzyme F420:L-glutamate ligase (252 aa).

Residues 12–15 (VPLE), 44–45 (HT), and Lys-49 each bind GTP. Asp-114 is an a divalent metal cation binding site. GTP is bound at residue Asn-117. 3 residues coordinate a divalent metal cation: Asp-155, Thr-156, and Gln-213. 211–218 (MGQADEGT) serves as a coordination point for GTP.

This sequence belongs to the CofE family. Homodimer. It depends on Mg(2+) as a cofactor. Mn(2+) serves as cofactor. The cofactor is K(+).

It catalyses the reaction oxidized coenzyme F420-0 + GTP + L-glutamate = oxidized coenzyme F420-1 + GDP + phosphate + H(+). The catalysed reaction is oxidized coenzyme F420-1 + GTP + L-glutamate = oxidized coenzyme F420-2 + GDP + phosphate + H(+). It participates in cofactor biosynthesis; coenzyme F420 biosynthesis. Its function is as follows. Catalyzes the GTP-dependent successive addition of two or more gamma-linked L-glutamates to the L-lactyl phosphodiester of 7,8-didemethyl-8-hydroxy-5-deazariboflavin (F420-0) to form coenzyme F420-0-glutamyl-glutamate (F420-2) or polyglutamated F420 derivatives. This Methanopyrus kandleri (strain AV19 / DSM 6324 / JCM 9639 / NBRC 100938) protein is Coenzyme F420:L-glutamate ligase.